We begin with the raw amino-acid sequence, 423 residues long: Serine--tRNA ligase (423 aa).

An L-serine-binding site is contributed by 231–233; that stretch reads TGE. Residue 262-264 participates in ATP binding; it reads RSE. Glu285 provides a ligand contact to L-serine. 349–352 contacts ATP; sequence EISS. Ser385 contacts L-serine.

Belongs to the class-II aminoacyl-tRNA synthetase family. Type-1 seryl-tRNA synthetase subfamily. As to quaternary structure, homodimer. The tRNA molecule binds across the dimer.

Its subcellular location is the cytoplasm. It catalyses the reaction tRNA(Ser) + L-serine + ATP = L-seryl-tRNA(Ser) + AMP + diphosphate + H(+). The catalysed reaction is tRNA(Sec) + L-serine + ATP = L-seryl-tRNA(Sec) + AMP + diphosphate + H(+). It participates in aminoacyl-tRNA biosynthesis; selenocysteinyl-tRNA(Sec) biosynthesis; L-seryl-tRNA(Sec) from L-serine and tRNA(Sec): step 1/1. Catalyzes the attachment of serine to tRNA(Ser). Is also able to aminoacylate tRNA(Sec) with serine, to form the misacylated tRNA L-seryl-tRNA(Sec), which will be further converted into selenocysteinyl-tRNA(Sec). This Coxiella burnetii (strain CbuK_Q154) (Coxiella burnetii (strain Q154)) protein is Serine--tRNA ligase.